Reading from the N-terminus, the 144-residue chain is Transcription antitermination protein NusB (144 aa).

Belongs to the NusB family.

In terms of biological role, involved in transcription antitermination. Required for transcription of ribosomal RNA (rRNA) genes. Binds specifically to the boxA antiterminator sequence of the ribosomal RNA (rrn) operons. This is Transcription antitermination protein NusB from Carboxydothermus hydrogenoformans (strain ATCC BAA-161 / DSM 6008 / Z-2901).